The chain runs to 765 residues: Transcription factor SKN7 (765 aa).

Residues 1–42 (MPPTNGEGGSQQPQQQQQQQQQQQQQQQQQQQQQQGGSGSSD) are disordered. The span at 11–35 (QQPQQQQQQQQQQQQQQQQQQQQQQ) shows a compositional bias: low complexity. The tract at residues 40-145 (SSDFVRKLYK…NLDNIRRKAP (106 aa)) is DNA-binding domain. A coiled-coil region spans residues 157-198 (FNASQQQIAALSESLQATQQQLQALQQQCYELEKTNRLLVSE). Residues 160-220 (SQQQIAALSE…QASNEIINHL (61 aa)) are hydrophobic repeat HR-A/B. Positions 371–391 (SSSQITPSQITPPPKDQMSSM) are disordered. The 117-residue stretch at 398-514 (RVLLVEDDKT…NMSRLLRRHL (117 aa)) folds into the Response regulatory domain. Asp-449 is modified (4-aspartylphosphate). The tract at residues 542–765 (TAGPATTGVG…PGVGVAGFVQ (224 aa)) is transactivation domain. A compositionally biased stretch (gly residues) spans 550–564 (VGVGVAGAPSGGAHG). Disordered stretches follow at residues 550 to 647 (VGVG…PAGL) and 686 to 765 (PGAM…GFVQ). The segment covering 569–584 (AQHQQGYAMAPPTTMQ) has biased composition (low complexity). The span at 626 to 636 (QPPPPPTPTQP) shows a compositional bias: pro residues. Composition is skewed to low complexity over residues 637 to 647 (SPTSAAPPAGL) and 699 to 715 (GVGHPAPSGAGSAAGAR). Positions 755 to 765 (HPGVGVAGFVQ) are enriched in gly residues.

The protein belongs to the SKN7 family. In terms of assembly, homotrimer.

It localises to the nucleus. Functionally, transcription factor that is part of a SLN1-YPD1-SKN7 two-component regulatory system, which controls gene expression in response to changes in the osmolarity of the extracellular environment. Under low osmotic conditions, phosphorylated and activated by the phosphorelay intermediate protein YPD1. Also activated in response to oxidative stress, independent on the two-component regulatory system. Regulates heat shock genes in response to oxidative stress and genes involved in cell wall integrity in response to osmotic changes. The polypeptide is Transcription factor SKN7 (Chaetomium thermophilum (strain DSM 1495 / CBS 144.50 / IMI 039719) (Thermochaetoides thermophila)).